The following is a 91-amino-acid chain: MKKLVLLFALVLLAFQVQADSIQNTDEETKTEEQQGEEDQAVSVSFGDPQGSGLQDAALGWGRRCPRCPPCPRCSWCPRCPTCPRCNCNPK.

A signal peptide spans 1 to 19 (MKKLVLLFALVLLAFQVQA). Residues 20–65 (DSIQNTDEETKTEEQQGEEDQAVSVSFGDPQGSGLQDAALGWGRRC) constitute a propeptide that is removed on maturation. The interval 22–55 (IQNTDEETKTEEQQGEEDQAVSVSFGDPQGSGLQ) is disordered. 6 tandem repeats follow at residues 65 to 67 (CPR), 68 to 70 (CPP), 71 to 73 (CPR), 77 to 79 (CPR), 80 to 82 (CPT), and 83 to 85 (CPR). Residues 65–85 (CPRCPPCPRCSWCPRCPTCPR) form a 6 X 3 AA tandem repeats of C-P-X region.

Belongs to the alpha-defensin family. In terms of tissue distribution, paneth cells of the small bowel.

It localises to the secreted. In terms of biological role, apparent precursor of a secreted, cationic, proline- and cysteine-rich peptide that contains Cys-Pro-Xaa repeats. Unlike cryptdin, the proposed mature peptide region lacks the structural motif characteristic of defensins. It may have microbicidal activities. This Mus musculus (Mouse) protein is Alpha-defensin 31.